Consider the following 114-residue polypeptide: Large ribosomal subunit protein uL22 (114 aa).

It belongs to the universal ribosomal protein uL22 family. In terms of assembly, part of the 50S ribosomal subunit.

Its function is as follows. This protein binds specifically to 23S rRNA; its binding is stimulated by other ribosomal proteins, e.g. L4, L17, and L20. It is important during the early stages of 50S assembly. It makes multiple contacts with different domains of the 23S rRNA in the assembled 50S subunit and ribosome. In terms of biological role, the globular domain of the protein is located near the polypeptide exit tunnel on the outside of the subunit, while an extended beta-hairpin is found that lines the wall of the exit tunnel in the center of the 70S ribosome. The protein is Large ribosomal subunit protein uL22 of Bacillus licheniformis (strain ATCC 14580 / DSM 13 / JCM 2505 / CCUG 7422 / NBRC 12200 / NCIMB 9375 / NCTC 10341 / NRRL NRS-1264 / Gibson 46).